The following is a 488-amino-acid chain: Inosine-5'-monophosphate dehydrogenase (488 aa).

CBS domains are found at residues 95–153 and 157–216; these read VISN…SIKI and MTKD…AKDE. NAD(+) contacts are provided by residues D250 and 300-302; that span reads GIG. Residues G302 and G304 each coordinate K(+). S305 provides a ligand contact to IMP. K(+) is bound at residue C307. Catalysis depends on C307, which acts as the Thioimidate intermediate. IMP-binding positions include 340–342, 363–364, and 387–391; these read DGG, GS, and YRGMG. R403 acts as the Proton acceptor in catalysis. E417 is an IMP binding site. Residues 467-488 form a disordered region; sequence AGLAESHPHNVQITKESPNYSF. Residues E471, S472, and H473 each contribute to the K(+) site. Residues 475 to 488 show a composition bias toward polar residues; sequence HNVQITKESPNYSF.

It belongs to the IMPDH/GMPR family. Homotetramer. K(+) is required as a cofactor.

The enzyme catalyses IMP + NAD(+) + H2O = XMP + NADH + H(+). It participates in purine metabolism; XMP biosynthesis via de novo pathway; XMP from IMP: step 1/1. Mycophenolic acid (MPA) is a non-competitive inhibitor that prevents formation of the closed enzyme conformation by binding to the same site as the amobile flap. In contrast, mizoribine monophosphate (MZP) is a competitive inhibitor that induces the closed conformation. MPA is a potent inhibitor of mammalian IMPDHs but a poor inhibitor of the bacterial enzymes. MZP is a more potent inhibitor of bacterial IMPDH. Its function is as follows. Catalyzes the conversion of inosine 5'-phosphate (IMP) to xanthosine 5'-phosphate (XMP), the first committed and rate-limiting step in the de novo synthesis of guanine nucleotides, and therefore plays an important role in the regulation of cell growth. This is Inosine-5'-monophosphate dehydrogenase from Staphylococcus epidermidis (strain ATCC 35984 / DSM 28319 / BCRC 17069 / CCUG 31568 / BM 3577 / RP62A).